The following is a 63-amino-acid chain: 2-hydroxymuconate tautomerase (63 aa).

Pro-2 acts as the Proton acceptor; via imino nitrogen in catalysis.

This sequence belongs to the 4-oxalocrotonate tautomerase family. In terms of assembly, homohexamer.

It carries out the reaction (2Z,4E)-2-hydroxyhexa-2,4-dienedioate = (3E)-2-oxohex-3-enedioate. It participates in aromatic compound metabolism; salicylate degradation. Catalyzes the ketonization of 2-hydroxymuconate stereoselectively to yield 2-oxo-3-hexenedioate. This Pseudomonas putida (Arthrobacter siderocapsulatus) protein is 2-hydroxymuconate tautomerase (nahJ).